We begin with the raw amino-acid sequence, 359 residues long: Dual-specificity RNA methyltransferase RlmN (359 aa).

The active-site Proton acceptor is the E90. Positions 109–342 (HQERYTVCIS…CTIRESKGLD (234 aa)) constitute a Radical SAM core domain. C116 and C347 are joined by a disulfide. The [4Fe-4S] cluster site is built by C123, C127, and C130. S-adenosyl-L-methionine contacts are provided by residues 173 to 174 (GE), S205, 228 to 230 (SLH), and N304. C347 serves as the catalytic S-methylcysteine intermediate.

Belongs to the radical SAM superfamily. RlmN family. [4Fe-4S] cluster serves as cofactor.

It is found in the cytoplasm. It catalyses the reaction adenosine(2503) in 23S rRNA + 2 reduced [2Fe-2S]-[ferredoxin] + 2 S-adenosyl-L-methionine = 2-methyladenosine(2503) in 23S rRNA + 5'-deoxyadenosine + L-methionine + 2 oxidized [2Fe-2S]-[ferredoxin] + S-adenosyl-L-homocysteine. It carries out the reaction adenosine(37) in tRNA + 2 reduced [2Fe-2S]-[ferredoxin] + 2 S-adenosyl-L-methionine = 2-methyladenosine(37) in tRNA + 5'-deoxyadenosine + L-methionine + 2 oxidized [2Fe-2S]-[ferredoxin] + S-adenosyl-L-homocysteine. In terms of biological role, specifically methylates position 2 of adenine 2503 in 23S rRNA and position 2 of adenine 37 in tRNAs. m2A2503 modification seems to play a crucial role in the proofreading step occurring at the peptidyl transferase center and thus would serve to optimize ribosomal fidelity. The sequence is that of Dual-specificity RNA methyltransferase RlmN from Sulfurovum sp. (strain NBC37-1).